Reading from the N-terminus, the 152-residue chain is Transcriptional regulator MraZ (152 aa).

2 SpoVT-AbrB domains span residues 5–52 (ATLV…PLPE) and 81–124 (ASEC…DETT).

This sequence belongs to the MraZ family. As to quaternary structure, forms oligomers.

Its subcellular location is the cytoplasm. It is found in the nucleoid. Its function is as follows. Negatively regulates its own expression and that of the subsequent genes in the proximal part of the division and cell wall (dcw) gene cluster. Acts by binding directly to DNA. May also regulate the expression of genes outside the dcw cluster. The chain is Transcriptional regulator MraZ from Salmonella typhi.